The primary structure comprises 103 residues: Histone H4 (103 aa).

Gly residues predominate over residues 1–14 (MSGRGKGGKGLGKG). The segment at 1–20 (MSGRGKGGKGLGKGGAKRHR) is disordered. A DNA-binding region spans residues 17 to 21 (KRHRK).

It belongs to the histone H4 family. The nucleosome is a histone octamer containing two molecules each of H2A, H2B, H3 and H4 assembled in one H3-H4 heterotetramer and two H2A-H2B heterodimers. The octamer wraps approximately 147 bp of DNA.

It localises to the nucleus. It is found in the chromosome. Functionally, core component of nucleosome. Nucleosomes wrap and compact DNA into chromatin, limiting DNA accessibility to the cellular machineries which require DNA as a template. Histones thereby play a central role in transcription regulation, DNA repair, DNA replication and chromosomal stability. DNA accessibility is regulated via a complex set of post-translational modifications of histones, also called histone code, and nucleosome remodeling. The polypeptide is Histone H4 (H4-I) (Volvox carteri (Green alga)).